Reading from the N-terminus, the 778-residue chain is Protection of telomeres protein 1 (778 aa).

It belongs to the telombin family. Homodimer or homooligomer. Component of the telomerase ribonucleoprotein complex. Binds single-stranded telomeric DNA as a monomer. Found in a complex with TERF1, TINF2 and TNKS1. Interacts with TNKS1.

It localises to the nucleus. It is found in the chromosome. Its subcellular location is the telomere. In terms of biological role, component of the telomerase ribonucleoprotein (RNP) complex that is essential for the replication of chromosome termini. Is a component of the double-stranded telomeric DNA-binding TRF1 complex that is involved in the regulation of telomere length by cis-inhibition of telomerase. Also acts as a single-stranded telomeric DNA-binding protein and thus may act as a downstream effector of the TRF1 complex and may transduce information about telomere maintenance and/or length to the telomere terminus. Binds to at least two telomeric single-stranded 5'-TTAGGG-3' repeats (G-strand). Its activity is TERT dependent but it does not increase TERT activity. The sequence is that of Protection of telomeres protein 1 (POT1) from Gallus gallus (Chicken).